The primary structure comprises 536 residues: Heparanase-like protein 3 (536 aa).

The first 24 residues, 1–24, serve as a signal peptide directing secretion; it reads MAYRQILAIVLFLCVFQFLDCTVS. N-linked (GlcNAc...) asparagine glycans are attached at residues Asn-30, Asn-122, Asn-176, and Asn-191. The active-site Proton donor is Glu-202. N-linked (GlcNAc...) asparagine glycosylation is found at Asn-265 and Asn-308. Catalysis depends on Glu-319, which acts as the Nucleophile. N-linked (GlcNAc...) asparagine glycans are attached at residues Asn-370, Asn-427, Asn-438, and Asn-510.

This sequence belongs to the glycosyl hydrolase 79 family.

It is found in the lysosome membrane. It localises to the secreted. Functionally, endoglycosidase which is a cell surface and extracellular matrix-degrading enzyme. Cleaves heparan sulfate proteoglycans (HSPGs) into heparan sulfate side chains and core proteoglycans. In Arabidopsis thaliana (Mouse-ear cress), this protein is Heparanase-like protein 3.